Here is a 197-residue protein sequence, read N- to C-terminus: Isopentenyl-diphosphate Delta-isomerase (197 aa).

His-41 and His-48 together coordinate Mn(2+). The 138-residue stretch at 46–183 (QLHRAFSVFL…AWFMTVLDAA (138 aa)) folds into the Nudix hydrolase domain. Cys-83 is a catalytic residue. His-85 contacts Mn(2+). A Mg(2+)-binding site is contributed by Glu-103. The Mn(2+) site is built by Glu-130 and Glu-132. Glu-132 is an active-site residue.

This sequence belongs to the IPP isomerase type 1 family. The cofactor is Mg(2+). It depends on Mn(2+) as a cofactor.

It is found in the cytoplasm. It carries out the reaction isopentenyl diphosphate = dimethylallyl diphosphate. It participates in isoprenoid biosynthesis; dimethylallyl diphosphate biosynthesis; dimethylallyl diphosphate from isopentenyl diphosphate: step 1/1. Its function is as follows. Catalyzes the 1,3-allylic rearrangement of the homoallylic substrate isopentenyl (IPP) to its highly electrophilic allylic isomer, dimethylallyl diphosphate (DMAPP). The protein is Isopentenyl-diphosphate Delta-isomerase of Streptomyces griseus subsp. griseus (strain JCM 4626 / CBS 651.72 / NBRC 13350 / KCC S-0626 / ISP 5235).